We begin with the raw amino-acid sequence, 507 residues long: Steroid (22S)-hydroxylase (507 aa).

A helical membrane pass occupies residues 12-32 (LLFFLPYILLALLTFYTTTVA). Cysteine 444 provides a ligand contact to heme.

The protein belongs to the cytochrome P450 family. Requires heme as cofactor.

Its subcellular location is the membrane. It catalyses the reaction a C27-steroid + reduced [NADPH--hemoprotein reductase] + O2 = a (22S)-22-hydroxy C27-steroid + oxidized [NADPH--hemoprotein reductase] + H2O + H(+). The enzyme catalyses a C28-steroid + reduced [NADPH--hemoprotein reductase] + O2 = a (22S)-22-hydroxy C28-steroid + oxidized [NADPH--hemoprotein reductase] + H2O + H(+). It carries out the reaction campesterol + reduced [NADPH--hemoprotein reductase] + O2 = (22S)-22-hydroxycampesterol + oxidized [NADPH--hemoprotein reductase] + H2O + H(+). The catalysed reaction is campestanol + reduced [NADPH--hemoprotein reductase] + O2 = 6-deoxycathasterone + oxidized [NADPH--hemoprotein reductase] + H2O + H(+). Its pathway is plant hormone biosynthesis; brassinosteroid biosynthesis. In terms of biological role, involved in reduction steps of the biosynthesis of plant campesterol-derivative steroids, ending to castasterone (CS) but missing brassinolide (BL). Catalyzes the conversion of campesterol (CR) to (22S)-22-hydroxycampesterol (22-OHCR, 22-hydroxyCR) and of campestanol (CN) to 6-deoxycathasterone (6-deoxoCT). In Brachypodium distachyon (Purple false brome), this protein is Steroid (22S)-hydroxylase.